The primary structure comprises 99 residues: Nucleoid-associated protein UUR10_0100 (99 aa).

This sequence belongs to the YbaB/EbfC family. As to quaternary structure, homodimer.

The protein localises to the cytoplasm. It localises to the nucleoid. Its function is as follows. Binds to DNA and alters its conformation. May be involved in regulation of gene expression, nucleoid organization and DNA protection. The polypeptide is Nucleoid-associated protein UUR10_0100 (Ureaplasma urealyticum serovar 10 (strain ATCC 33699 / Western)).